The following is a 229-amino-acid chain: Cytidylate kinase (229 aa).

Residue 12–20 (GPSGSGKGT) participates in ATP binding.

Belongs to the cytidylate kinase family. Type 1 subfamily.

The protein resides in the cytoplasm. The enzyme catalyses CMP + ATP = CDP + ADP. The catalysed reaction is dCMP + ATP = dCDP + ADP. The sequence is that of Cytidylate kinase from Azotobacter vinelandii (strain DJ / ATCC BAA-1303).